Consider the following 230-residue polypeptide: Uracil-DNA glycosylase (230 aa).

The active-site Proton acceptor is Asp70.

This sequence belongs to the uracil-DNA glycosylase (UDG) superfamily. UNG family.

It is found in the cytoplasm. It carries out the reaction Hydrolyzes single-stranded DNA or mismatched double-stranded DNA and polynucleotides, releasing free uracil.. In terms of biological role, excises uracil residues from the DNA which can arise as a result of misincorporation of dUMP residues by DNA polymerase or due to deamination of cytosine. This Pseudomonas fluorescens (strain ATCC BAA-477 / NRRL B-23932 / Pf-5) protein is Uracil-DNA glycosylase.